We begin with the raw amino-acid sequence, 49 residues long: MRFTFVLVIAATVAVLGFFGINAEPMPDPHAEPYPDAAINPKSVQSLLG.

An N-terminal signal peptide occupies residues 1–23 (MRFTFVLVIAATVAVLGFFGINA). 2 AXPX repeats span residues 23–26 (AEPM) and 31–34 (AEPY). A propeptide spanning residues 24–37 (EPMPDPHAEPYPDA) is cleaved from the precursor. Residue Leu-48 is modified to Leucine amide.

In terms of tissue distribution, expressed by the venom gland.

It is found in the secreted. The chain is Venom peptide 3 from Eumenes pomiformis (Potter wasp).